Reading from the N-terminus, the 472-residue chain is Phosphoenolpyruvate carboxykinase (ATP), glycosomal (472 aa).

Residue 221 to 228 coordinates ATP; that stretch reads GLSGTGKT.

Belongs to the phosphoenolpyruvate carboxykinase (ATP) family. As to quaternary structure, homodimer.

The protein resides in the glycosome. It carries out the reaction oxaloacetate + ATP = phosphoenolpyruvate + ADP + CO2. It functions in the pathway carbohydrate biosynthesis; gluconeogenesis. This is Phosphoenolpyruvate carboxykinase (ATP), glycosomal (PEPCK) from Trypanosoma cruzi.